A 270-amino-acid chain; its full sequence is Putative phosphoenolpyruvate synthase regulatory protein (270 aa).

150–157 (GVSRCGKT) is an ADP binding site.

Belongs to the pyruvate, phosphate/water dikinase regulatory protein family. PSRP subfamily.

The catalysed reaction is [pyruvate, water dikinase] + ADP = [pyruvate, water dikinase]-phosphate + AMP + H(+). It catalyses the reaction [pyruvate, water dikinase]-phosphate + phosphate + H(+) = [pyruvate, water dikinase] + diphosphate. Functionally, bifunctional serine/threonine kinase and phosphorylase involved in the regulation of the phosphoenolpyruvate synthase (PEPS) by catalyzing its phosphorylation/dephosphorylation. In Shewanella piezotolerans (strain WP3 / JCM 13877), this protein is Putative phosphoenolpyruvate synthase regulatory protein.